The sequence spans 235 residues: Probable transglycosylase SceD (235 aa).

The signal sequence occupies residues 1–26; that stretch reads MKKTIIASSLAVGLGVVAGNAGHADA. The segment at 90-159 is disordered; it reads QQDVSAQAST…NASSGSSVNV (70 aa). Over residues 99 to 110 the composition is skewed to polar residues; sequence TVSNQTSAEQVG. Over residues 111-159 the composition is skewed to low complexity; sequence SQQQSSQAQPTQTQQAPQTEQTQQPQTEATTSNSSSSNNNASSGSSVNV.

The protein belongs to the transglycosylase family. SceD subfamily.

The protein localises to the secreted. Its function is as follows. Is able to cleave peptidoglycan and affects clumping and separation of bacterial cells. The chain is Probable transglycosylase SceD (sceD) from Staphylococcus haemolyticus (strain JCSC1435).